Consider the following 428-residue polypeptide: GTPase Obg (428 aa).

The 158-residue stretch at 1 to 158 folds into the Obg domain; that stretch reads MFVDQVKVYV…RYIVLELKVL (158 aa). The disordered stretch occupies residues 117–143; that stretch reads AKGGRGGRGNTRFATPANPAPQLSEHG. Positions 159–329 constitute an OBG-type G domain; the sequence is ADVGLVGFPS…LLFEVANQLE (171 aa). GTP is bound by residues 165-172, 190-194, 212-215, 282-285, and 310-312; these read GFPSVGKS, FTTLV, DLPG, NKMD, and SAV. Ser172 and Thr192 together coordinate Mg(2+). The OCT domain occupies 350-428; that stretch reads TMEDEEIPFN…LLEFEFEFID (79 aa).

This sequence belongs to the TRAFAC class OBG-HflX-like GTPase superfamily. OBG GTPase family. In terms of assembly, monomer. It depends on Mg(2+) as a cofactor.

The protein resides in the cytoplasm. In terms of biological role, an essential GTPase which binds GTP, GDP and possibly (p)ppGpp with moderate affinity, with high nucleotide exchange rates and a fairly low GTP hydrolysis rate. Plays a role in control of the cell cycle, stress response, ribosome biogenesis and in those bacteria that undergo differentiation, in morphogenesis control. The chain is GTPase Obg from Bacillus velezensis (strain DSM 23117 / BGSC 10A6 / LMG 26770 / FZB42) (Bacillus amyloliquefaciens subsp. plantarum).